The chain runs to 750 residues: Circadian input-output histidine kinase CikA (750 aa).

The N-terminal domain stretch occupies residues 1–173; sequence MLPAFSPIFR…QVIAQIRQSL (173 aa). Residues 174–333 form a GAF domain region; the sequence is DLSEILNNAV…KNFLGQIGEH (160 aa). One can recognise a Histidine kinase domain in the interval 385 to 609; that stretch reads NISHELRTPL…IFTTVIPQQN (225 aa). His388 bears the Phosphohistidine; by autocatalysis mark. The psR domain, bind KaiB(fs) stretch occupies residues 604-750; it reads VIPQQNFPPT…VQSIQQEPLR (147 aa). Positions 631-745 constitute a Response regulatory domain; the sequence is SVIVIEQDEE…LLLQRVQSIQ (115 aa). Asp680 is modified (4-aspartylphosphate).

In the N-terminal section; belongs to the phytochrome family. As to quaternary structure, homodimer. Part of the circadian clock (KaiA, KaiB, KaiC, CikA, RpaA, SasA), the composition of which varies during the circadian cycle. KaiA and CikA compete for binding to KaiB(fs). Interacts with RpaA.

The catalysed reaction is ATP + protein L-histidine = ADP + protein N-phospho-L-histidine.. Its function is as follows. Functions in an input pathway to the Kai circadian clock. Senses oxidized quinones via its C-terminal pseudo-receiver domain, providing a link between cell metabolism and the clock. Affects the ratio of phosphorylated to unphosphorylated KaiC, binds quinones via its pseudo-receptor domain. Quinone-binding destabilizes the protein rapidly. Autophosphorylates, does not transfer the phosphate to its pseudo-receiver (PsR) domain. May play a role in cell division. Functionally, also functions in a two-component CikA/RpaA output pathway from the circadian clock, negatively regulating kaiBC expression independently of labA and of sasA. One of three clock output pathways. Dephosphorylates phospho-RpaA, enhanced by KaiB and KaiC, has only modest kinase activity on RpaA. This is Circadian input-output histidine kinase CikA from Synechocystis sp. (strain ATCC 27184 / PCC 6803 / Kazusa).